Consider the following 733-residue polypeptide: Tudor domain-containing protein 3 (733 aa).

The disordered stretch occupies residues threonine 241–asparagine 281. Residues lysine 262–asparagine 281 are compositionally biased toward basic and acidic residues. The 41-residue stretch at leucine 290–arginine 330 folds into the UBA domain. The disordered stretch occupies residues glutamine 333–aspartate 630. Residues proline 346 to arginine 355 are compositionally biased toward basic residues. A compositionally biased stretch (polar residues) spans proline 392–glutamine 408. A compositionally biased stretch (basic and acidic residues) spans proline 420–phenylalanine 441. Positions proline 446–glutamine 455 are enriched in polar residues. The span at lysine 456–aspartate 478 shows a compositional bias: basic and acidic residues. Positions valine 484–alanine 499 are enriched in polar residues. Over residues histidine 559 to glutamine 570 the composition is skewed to basic and acidic residues. One can recognise a Tudor domain in the interval asparagine 639–aspartate 699. Residues leucine 706 to proline 716 are compositionally biased toward basic and acidic residues. The segment at leucine 706–aspartate 733 is disordered.

In terms of assembly, component of mRNA stress granules.

The protein localises to the cytoplasm. It is found in the nucleus. Functionally, scaffolding protein that specifically recognizes and binds dimethylarginine-containing proteins. Plays a role in the regulation of translation of target mRNAs by binding Arg/Gly-rich motifs (GAR) in dimethylarginine-containing proteins. In nucleus, acts as a coactivator: recognizes and binds asymmetric dimethylation on the core histone tails associated with transcriptional activation (H3R17me2a and H4R3me2a) and recruits proteins at these arginine-methylated loci. In cytoplasm, acts as an antiviral factor that participates in the assembly of stress granules together with G3BP1. The sequence is that of Tudor domain-containing protein 3 (tdrd3) from Danio rerio (Zebrafish).